A 196-amino-acid polypeptide reads, in one-letter code: Glycerol-3-phosphate acyltransferase (196 aa).

Transmembrane regions (helical) follow at residues 4 to 24 (LTLT…AILV), 56 to 76 (ATVL…AYFL), 80 to 100 (SLYL…PIFF), 114 to 134 (TLLP…VLVV), and 155 to 175 (VYFL…LILF).

This sequence belongs to the PlsY family. In terms of assembly, probably interacts with PlsX.

It is found in the cell inner membrane. It carries out the reaction an acyl phosphate + sn-glycerol 3-phosphate = a 1-acyl-sn-glycero-3-phosphate + phosphate. It functions in the pathway lipid metabolism; phospholipid metabolism. In terms of biological role, catalyzes the transfer of an acyl group from acyl-phosphate (acyl-PO(4)) to glycerol-3-phosphate (G3P) to form lysophosphatidic acid (LPA). This enzyme utilizes acyl-phosphate as fatty acyl donor, but not acyl-CoA or acyl-ACP. This Colwellia psychrerythraea (strain 34H / ATCC BAA-681) (Vibrio psychroerythus) protein is Glycerol-3-phosphate acyltransferase.